The following is a 298-amino-acid chain: UDP-N-acetylenolpyruvoylglucosamine reductase (298 aa).

In terms of domain architecture, FAD-binding PCMH-type spans 27 to 191 (TGGEADVFVM…LDATFSLALE (165 aa)). R170 is a catalytic residue. S220 functions as the Proton donor in the catalytic mechanism. E290 is an active-site residue.

It belongs to the MurB family. The cofactor is FAD.

It is found in the cytoplasm. It catalyses the reaction UDP-N-acetyl-alpha-D-muramate + NADP(+) = UDP-N-acetyl-3-O-(1-carboxyvinyl)-alpha-D-glucosamine + NADPH + H(+). The protein operates within cell wall biogenesis; peptidoglycan biosynthesis. Its function is as follows. Cell wall formation. This chain is UDP-N-acetylenolpyruvoylglucosamine reductase, found in Listeria monocytogenes serotype 4a (strain HCC23).